Here is a 428-residue protein sequence, read N- to C-terminus: UPF0229 protein YeaH (428 aa).

Positions 78-90 (GNDHFIQNDRIER) are enriched in basic and acidic residues. The segment at 78–111 (GNDHFIQNDRIERPQGGGGGGSGSGQGQASQDGE) is disordered. Gly residues predominate over residues 92–103 (QGGGGGGSGSGQ).

The protein belongs to the UPF0229 family.

The chain is UPF0229 protein YeaH from Salmonella heidelberg (strain SL476).